A 297-amino-acid chain; its full sequence is 4-hydroxy-tetrahydrodipicolinate synthase (297 aa).

Threonine 45 provides a ligand contact to pyruvate. The active-site Proton donor/acceptor is tyrosine 133. Catalysis depends on lysine 161, which acts as the Schiff-base intermediate with substrate. Isoleucine 203 lines the pyruvate pocket.

Belongs to the DapA family. As to quaternary structure, homotetramer; dimer of dimers.

Its subcellular location is the cytoplasm. It carries out the reaction L-aspartate 4-semialdehyde + pyruvate = (2S,4S)-4-hydroxy-2,3,4,5-tetrahydrodipicolinate + H2O + H(+). It functions in the pathway amino-acid biosynthesis; L-lysine biosynthesis via DAP pathway; (S)-tetrahydrodipicolinate from L-aspartate: step 3/4. Catalyzes the condensation of (S)-aspartate-beta-semialdehyde [(S)-ASA] and pyruvate to 4-hydroxy-tetrahydrodipicolinate (HTPA). The sequence is that of 4-hydroxy-tetrahydrodipicolinate synthase from Buchnera aphidicola subsp. Cinara cedri (strain Cc).